The sequence spans 100 residues: Urease subunit gamma (100 aa).

Belongs to the urease gamma subunit family. Heterotrimer of UreA (gamma), UreB (beta) and UreC (alpha) subunits. Three heterotrimers associate to form the active enzyme.

The protein localises to the cytoplasm. It carries out the reaction urea + 2 H2O + H(+) = hydrogencarbonate + 2 NH4(+). The protein operates within nitrogen metabolism; urea degradation; CO(2) and NH(3) from urea (urease route): step 1/1. In Nitrosococcus oceani (strain ATCC 19707 / BCRC 17464 / JCM 30415 / NCIMB 11848 / C-107), this protein is Urease subunit gamma.